A 124-amino-acid chain; its full sequence is Ribonuclease P protein component (124 aa).

Belongs to the RnpA family. In terms of assembly, consists of a catalytic RNA component (M1 or rnpB) and a protein subunit.

The catalysed reaction is Endonucleolytic cleavage of RNA, removing 5'-extranucleotides from tRNA precursor.. Its function is as follows. RNaseP catalyzes the removal of the 5'-leader sequence from pre-tRNA to produce the mature 5'-terminus. It can also cleave other RNA substrates such as 4.5S RNA. The protein component plays an auxiliary but essential role in vivo by binding to the 5'-leader sequence and broadening the substrate specificity of the ribozyme. The sequence is that of Ribonuclease P protein component from Maridesulfovibrio salexigens (strain ATCC 14822 / DSM 2638 / NCIMB 8403 / VKM B-1763) (Desulfovibrio salexigens).